Reading from the N-terminus, the 708-residue chain is Leukotoxin translocation ATP-binding protein LktB (708 aa).

The Peptidase C39 domain occupies 1–126; sequence MEANHQRNDL…ACYQGQLILV (126 aa). The ABC transmembrane type-1 domain occupies 155-437; the sequence is FLETLIVSIF…LAQLWQDFQQ (283 aa). 5 helical membrane passes run 159 to 179, 192 to 212, 270 to 290, 296 to 316, and 389 to 409; these read LIVS…FQVV, LNII…LSGL, ALTS…MWYY, LVIL…SPIL, and VMVI…LSIG. Positions 469–704 constitute an ABC transporter domain; sequence ISFKNIRFRY…SNGLYSYLHQ (236 aa). 503-510 contacts ATP; it reads GRSGSGKS.

Belongs to the ABC transporter superfamily. Protein-1 exporter (TC 3.A.1.109) family. As to quaternary structure, homodimer.

It localises to the cell inner membrane. It carries out the reaction ATP + H2O + proteinSide 1 = ADP + phosphate + proteinSide 2.. In terms of biological role, part of the ABC transporter complex LktBD involved in leukotoxin export. Transmembrane domains (TMD) form a pore in the inner membrane and the ATP-binding domain (NBD) is responsible for energy generation. The polypeptide is Leukotoxin translocation ATP-binding protein LktB (lktB) (Mannheimia haemolytica (Pasteurella haemolytica)).